The primary structure comprises 133 residues: Interferon-induced transmembrane protein 3 (133 aa).

The Cytoplasmic segment spans residues 1-57 (MNHTVQTFFSPVNSGQPPNYEMLKEEHEVAVLGAPHNPAPPTSTVIHIRSETSVPDH). Phosphotyrosine is present on tyrosine 20. Lysine 24 participates in a covalent cross-link: Glycyl lysine isopeptide (Lys-Gly) (interchain with G-Cter in ubiquitin). Residues 58–78 (VVWSLFNTLFMNPCCLGFIAF) constitute an intramembrane region (helical). Residues 60–93 (WSLFNTLFMNPCCLGFIAFAYSVKSRDRKMVGDV) are interaction with SPP1. Residues cysteine 71 and cysteine 72 are each lipidated (S-palmitoyl cysteine). At 79-107 (AYSVKSRDRKMVGDVTGAQAYASTAKCLN) the chain is on the cytoplasmic side. Residues lysine 83, lysine 88, and lysine 104 each participate in a glycyl lysine isopeptide (Lys-Gly) (interchain with G-Cter in ubiquitin) cross-link. Cysteine 105 carries S-palmitoyl cysteine lipidation. The helical transmembrane segment at 108 to 128 (IWALILGILMTILLIVIPVLI) threads the bilayer. The segment at 108–133 (IWALILGILMTILLIVIPVLIFQAYG) is interaction with VAPA. Topologically, residues 129–133 (FQAYG) are extracellular.

The protein belongs to the CD225/Dispanin family. Interacts with ATP6V0B. Interacts with CD81. Interacts with SPP1; the interaction reduces OPN expression. Interacts with VAPA. Interacts with BRI3 (isoforms 1 and 2); the interaction with isoform 2 is weaker than with isoform 1. Palmitoylation on membrane-proximal cysteines controls clustering in membrane compartments and antiviral activity against influenza virus and hepatitis C virus (HCV). Has no effect on anti-SARS-CoV-2 activity. Post-translationally, not glycosylated. In terms of processing, polyubiquitinated with both 'Lys-48' and 'Lys-63' linkages. Ubiquitination negatively regulates antiviral activity. Lys-24 is the most prevalent ubiquitination site. Phosphorylation at Tyr-20 is required for endosomal and lysosomal location.

The protein localises to the cell membrane. It localises to the late endosome membrane. Its subcellular location is the early endosome membrane. The protein resides in the lysosome membrane. It is found in the cytoplasm. The protein localises to the perinuclear region. Its function is as follows. IFN-induced antiviral protein which disrupts intracellular cholesterol homeostasis. Inhibits the entry of viruses to the host cell cytoplasm by preventing viral fusion with cholesterol depleted endosomes. May inactivate new enveloped viruses which buds out of the infected cell, by letting them go out with a cholesterol depleted membrane. Active against multiple viruses, including influenza A virus, SARS coronaviruses (SARS-CoV and SARS-CoV-2), Marburg virus (MARV), Ebola virus (EBOV), Dengue virus (DNV), West Nile virus (WNV), human immunodeficiency virus type 1 (HIV-1), hepatitis C virus (HCV) and vesicular stomatitis virus (VSV). Can inhibit: influenza virus hemagglutinin protein-mediated viral entry, MARV and EBOV GP1,2-mediated viral entry, SARS-CoV and SARS-CoV-2 S protein-mediated viral entry and VSV G protein-mediated viral entry. Plays a critical role in the structural stability and function of vacuolar ATPase (v-ATPase). Establishes physical contact with the v-ATPase of endosomes which is critical for proper clathrin localization and is also required for the function of the v-ATPase to lower the pH in phagocytic endosomes thus establishing an antiviral state. In hepatocytes, IFITM proteins act in a coordinated manner to restrict HCV infection by targeting the endocytosed HCV virion for lysosomal degradation. IFITM2 and IFITM3 display anti-HCV activity that may complement the anti-HCV activity of IFITM1 by inhibiting the late stages of HCV entry, possibly in a coordinated manner by trapping the virion in the endosomal pathway and targeting it for degradation at the lysosome. Exerts opposing activities on SARS-CoV-2, including amphipathicity-dependent restriction of virus at endosomes and amphipathicity-independent enhancement of infection at the plasma membrane. The sequence is that of Interferon-induced transmembrane protein 3 from Homo sapiens (Human).